Consider the following 309-residue polypeptide: Protoheme IX farnesyltransferase (309 aa).

A run of 9 helical transmembrane segments spans residues 35-55 (IGIV…ALYF), 64-84 (LHIV…SCSI), 114-134 (VLWL…MTTV), 135-155 (TAAI…TMWS), 161-181 (LNTV…WTAV), 187-207 (VVPL…FLAL), 236-256 (IVVW…LGVP), 257-277 (FLTV…YGFK), and 289-309 (FIYS…ATLW).

Belongs to the UbiA prenyltransferase family. Protoheme IX farnesyltransferase subfamily. As to quaternary structure, interacts with CtaA.

The protein localises to the cell membrane. It catalyses the reaction heme b + (2E,6E)-farnesyl diphosphate + H2O = Fe(II)-heme o + diphosphate. Its pathway is porphyrin-containing compound metabolism; heme O biosynthesis; heme O from protoheme: step 1/1. Functionally, converts heme B (protoheme IX) to heme O by substitution of the vinyl group on carbon 2 of heme B porphyrin ring with a hydroxyethyl farnesyl side group. This chain is Protoheme IX farnesyltransferase, found in Geobacillus sp. (strain WCH70).